Consider the following 174-residue polypeptide: Cytochrome c-type biogenesis protein CcmE (174 aa).

Topologically, residues 1–7 (MTRKSRR) are cytoplasmic. Residues 8–28 (LILIGAGLGVLALAAGLILTA) form a helical; Signal-anchor for type II membrane protein membrane-spanning segment. Topologically, residues 29–174 (LNDTIVFFRT…PAVSPARSTP (146 aa)) are periplasmic. Residues His121 and Tyr125 each coordinate heme. The segment covering 130–144 (VADALKKSGHWKEGE) has biased composition (basic and acidic residues). The interval 130 to 174 (VADALKKSGHWKEGEEGGPVPPAAKTPGPQSSAAPPAVSPARSTP) is disordered. Positions 156-174 (PGPQSSAAPPAVSPARSTP) are enriched in low complexity.

Belongs to the CcmE/CycJ family.

It localises to the cell inner membrane. In terms of biological role, heme chaperone required for the biogenesis of c-type cytochromes. Transiently binds heme delivered by CcmC and transfers the heme to apo-cytochromes in a process facilitated by CcmF and CcmH. The protein is Cytochrome c-type biogenesis protein CcmE of Azorhizobium caulinodans (strain ATCC 43989 / DSM 5975 / JCM 20966 / LMG 6465 / NBRC 14845 / NCIMB 13405 / ORS 571).